The primary structure comprises 278 residues: Leucine-rich repeat-containing protein 10 (278 aa).

LRR repeat units follow at residues 30-51 (LDRM…VCSF), 52-74 (QELV…LGQL), 76-97 (NLQI…VCTL), 98-121 (KQLC…SLLQ), 123-143 (LRTL…VCEL), 144-166 (SLLK…LQRL), 167-189 (RELR…LLHM), and 191-213 (FLEI…HLSS). Positions 239-250 (RWAEETPEPDPR) are enriched in basic and acidic residues. Residues 239–278 (RWAEETPEPDPRKARRYALAREESQEAQLPALPPLPPTNS) are disordered. Residues 269 to 278 (ALPPLPPTNS) show a composition bias toward pro residues.

It localises to the nucleus. Its function is as follows. May play important roles in cardiac development and/or cardiac function. The protein is Leucine-rich repeat-containing protein 10 (LRRC10) of Bos taurus (Bovine).